The following is a 66-amino-acid chain: Photosystem II reaction center protein J (66 aa).

Positions 1 to 25 (MSGKKSPYPDGRIPDRNPDGTPAVP) are disordered. Residues 37–57 (LWLVATAGGMAVLFVVGLFFY) traverse the membrane as a helical segment.

The protein belongs to the PsbJ family. PSII is composed of 1 copy each of membrane proteins PsbA, PsbB, PsbC, PsbD, PsbE, PsbF, PsbH, PsbI, PsbJ, PsbK, PsbL, PsbM, PsbT, PsbX, PsbY, PsbZ, Psb30/Ycf12, peripheral proteins PsbO, CyanoQ (PsbQ), PsbU, PsbV and a large number of cofactors. It forms dimeric complexes.

The protein localises to the cellular thylakoid membrane. One of the components of the core complex of photosystem II (PSII). PSII is a light-driven water:plastoquinone oxidoreductase that uses light energy to abstract electrons from H(2)O, generating O(2) and a proton gradient subsequently used for ATP formation. It consists of a core antenna complex that captures photons, and an electron transfer chain that converts photonic excitation into a charge separation. This chain is Photosystem II reaction center protein J, found in Synechococcus sp. (strain CC9605).